Reading from the N-terminus, the 219-residue chain is ATP-dependent Clp protease proteolytic subunit 4 (219 aa).

Catalysis depends on Ser125, which acts as the Nucleophile. His150 is an active-site residue.

It belongs to the peptidase S14 family. As to quaternary structure, fourteen ClpP subunits assemble into 2 heptameric rings which stack back to back to give a disk-like structure with a central cavity, resembling the structure of eukaryotic proteasomes.

It localises to the cytoplasm. The catalysed reaction is Hydrolysis of proteins to small peptides in the presence of ATP and magnesium. alpha-casein is the usual test substrate. In the absence of ATP, only oligopeptides shorter than five residues are hydrolyzed (such as succinyl-Leu-Tyr-|-NHMec, and Leu-Tyr-Leu-|-Tyr-Trp, in which cleavage of the -Tyr-|-Leu- and -Tyr-|-Trp bonds also occurs).. In terms of biological role, cleaves peptides in various proteins in a process that requires ATP hydrolysis. Has a chymotrypsin-like activity. Plays a major role in the degradation of misfolded proteins. In Prochlorococcus marinus (strain MIT 9312), this protein is ATP-dependent Clp protease proteolytic subunit 4.